Here is a 209-residue protein sequence, read N- to C-terminus: Small ribosomal subunit protein uS3 (209 aa).

Positions 38-107 constitute a KH type-2 domain; it reads IRKVIKSKYA…RFIVNVEEIK (70 aa).

It belongs to the universal ribosomal protein uS3 family. As to quaternary structure, part of the 30S ribosomal subunit. Forms a tight complex with proteins S10 and S14.

Binds the lower part of the 30S subunit head. Binds mRNA in the 70S ribosome, positioning it for translation. This is Small ribosomal subunit protein uS3 from Thermosipho melanesiensis (strain DSM 12029 / CIP 104789 / BI429).